The primary structure comprises 382 residues: Fimbrial usher domain-containing protein YdeT (382 aa).

The sequence is that of Fimbrial usher domain-containing protein YdeT (ydeT) from Escherichia coli O157:H7.